Reading from the N-terminus, the 2056-residue chain is MSSRPNNNPGGSLRRSQRNTAGAQPQEDTAGGRSNLEQAENKTHSLPESRKSHFKTPKVQSNTTSGPSKGHSSKRGCSSSNLLPNPEDTERINTTDTQRPKKDHVRGVKRSASPDHSRTNSPSSAKKPKALQHPEPSSGPRRPNNKPKKRQGSQEQPFPSASLPSTSKAHSRKGGSQGTSPLPKRKRTELSPCVKSSSAAVISTGAEDRPPKLSKLASKSATSAKAGCSNITDSSSSASTSSSSSAVASVSAAPPGARVKQGKDQNKARRSRSASSPSPRRSSREKEQTKTSSSSKFDWAARFSPKVSLPKTKLSLPGSSKTETSKPGPSGLQAKLANLRKSTKKRSESPPAELPSLRRSTRQKTTGSCASTSRRGSGLGKRAAAEARRQEKMADPDNQEGANSSAARTDETAQGAAASSSVAGAVGMTTSGESESDDSEMGRLQALLEARGLPPHLFGPLGPRMSQLFHRTIGSGASSKAQQLLQGLQATDESQQLQAVIEMCQLLVMGNEETLGGFPVKSVVPALITLLQMEHNFDIMNHACRALTYMMEALPRSSAVVVDAIPVFLEKLQVIQCIDVAEQALTALEMLSRRHSKAILQAGGLADCLLYLEFFSINAQRNALAIAANCCQSISPDEFHFVADSLPLLTQRLTHQDKKSVESTCLCFARLVDNFQHEENLLQQVASRDLLTNIQQLLVVTPPILSSGMFIMVVRMFSLMCSNCPTLAVQLMKQNIAETLHFLLCGASNGSCLEQIDLVPRSPQELYELTSLICELMPCLPKEGIFAVDTMLKKGNAQNTDGAIWQWRDDRGLWHPYSRIDSRIIEAAHQVGEDEISLSTLGRVYTIDFNSMQQINEDTGTARAIQRKPNPVANANTTGHSELKRDDARAQLMKEDPELAKSFIKTLFGVLYEVYSSSAGPAVRHKCLRAILRIIYFADAELLKDVLKNHAVSSHIASMLSSQDLKIVVGALQMAEILMQKLPDIFSVYFRREGVMHQVKNLAESEALLTSPPKVCTNGSGSLASTTTISTGSGTASGNSAADLGSPSLQHRDDSLDLSPPGRLSDVLKRKRLPKRGPRRPKYSPPRDEDKVDNQAKSPTTTQSPKSFLASLNPKTWGRLSTQSNSNNIEPARTAGVSGLARAASKDTISNNRERIRGWIKEQAHKFVERYFSSENMDGSNPALNVLQRLCNATEQLNLQVDGGVECLVEIRSIVSESDVSSFEIQHSGFVKQLLLYLTSKSDKDIVSRDIRLKRFLHVFFGTPLPGEEPLAKLDPTENRHLLALVHKMNNCLSQMEQFPVKVHDFPSGNGTGSRGSQALKFFNTHQLKCQLQRHPDCTNVKQWKGGPVKIDPLALVQAIERYLVVRGYGRVREDDEDSDDDGSDEEIDESLAAQFLNSGNVRHRLQFYIGDHLLPYNMTVYQAVRQYSIQTEEERESTDDESNPLGRAGIWTKTHTIWYKPVREEEESAKDTVGGKRGRAQTAPTKTSPRNSKKHDELWHGKDGVCPRILNPLEVYLISGPPENITFDDPSLDVVILLRVLHAISRYWYYLYDNAVCKEIIPTSEFNNSKLTAKANRQLQDPLVIMTGNIPTWLTELGKSCPFFFPFDTRQMLFYVTAFDRDRAMQRLLDTNPEINQSDSQDSRVAPRLDRKKRTVNREDLLKQAESVMQDLGSSRAMLEIQYENEVGTGLGPTLEFYALVSQELQRADLGLWRGEEVTLPNPKGSQEGTKYIHNLQGLFALPFGRTAKPAHIAKVKMKFRFLGKLMAKAIMDFRLVDIPLGLPFYKWMLRQESSLATHDLVNIDPVVAKSVYHLEDIVRQKKRLEQDKAQTKESLQFALESLNMNGCSVEDLGLDFTLPGFPNIELKKGGKDVPVTIHNLEDYVRLVIYWALNEGVSRQLDSFRDGFESVFPLNHLQYFYPEELDQLLCGSRADPWDVKTLMECCRPDHGYTHDSRAVKFLFEILSSFDKEQQRLFLQFVTGSPRLPVGGFRSLNPPLTIVRKTFEATENPDDFLPSVMTCVNYLKLPDYSSIDNMREKLLMAAREGQQSFHLS.

Polar residues-rich tracts occupy residues 1–10 (MSSRPNNNPG) and 18–27 (RNTAGAQPQE). The disordered stretch occupies residues 1–440 (MSSRPNNNPG…SGESESDDSE (440 aa)). Basic and acidic residues predominate over residues 39 to 51 (AENKTHSLPESRK). 2 stretches are compositionally biased toward polar residues: residues 58 to 67 (KVQSNTTSGP) and 153 to 168 (SQEQ…STSK). 2 stretches are compositionally biased toward low complexity: residues 213–226 (LSKL…SAKA) and 234–253 (SSSS…VSAA). Composition is skewed to polar residues over residues 317–327 (PGSSKTETSKP) and 363–375 (QKTT…TSRR). A compositionally biased stretch (basic and acidic residues) spans 383–395 (AAAEARRQEKMAD). Residues 415 to 433 (GAAASSSVAGAVGMTTSGE) are compositionally biased toward low complexity. In terms of domain architecture, WWE spans 791–905 (MLKKGNAQNT…DPELAKSFIK (115 aa)). Residues 1027 to 1042 (TTISTGSGTASGNSAA) show a composition bias toward low complexity. Disordered stretches follow at residues 1027-1147 (TTIS…ASKD), 1465-1500 (EEEE…DELW), and 1632-1651 (TNPE…PRLD). A compositionally biased stretch (basic residues) spans 1069–1082 (KRKRLPKRGPRRPK). Basic and acidic residues predominate over residues 1085-1094 (PPRDEDKVDN). Composition is skewed to polar residues over residues 1095-1106 (QAKSPTTTQSPK) and 1119-1129 (RLSTQSNSNNI). The interval 1560–1634 (EIIPTSEFNN…AMQRLLDTNP (75 aa)) is K-box. One can recognise an HECT domain in the interval 1949 to 2056 (PDHGYTHDSR…REGQQSFHLS (108 aa)). The Glycyl thioester intermediate role is filled by cysteine 2023.

This sequence belongs to the UPL family. K-HECT subfamily.

It is found in the nucleus. Its subcellular location is the nucleoplasm. The enzyme catalyses S-ubiquitinyl-[E2 ubiquitin-conjugating enzyme]-L-cysteine + [acceptor protein]-L-lysine = [E2 ubiquitin-conjugating enzyme]-L-cysteine + N(6)-ubiquitinyl-[acceptor protein]-L-lysine.. The protein operates within protein modification; protein ubiquitination. Functionally, E3 ubiquitin-protein ligase involved in ubiquitin fusion degradation (UFD) pathway and regulation of DNA repair. Part of the ubiquitin fusion degradation (UFD) pathway, a process that mediates ubiquitination of protein at their N-terminus, regardless of the presence of lysine residues in target proteins. Acts as a key regulator of DNA damage response by acting as a suppressor of RNF168, an E3 ubiquitin-protein ligase that promotes accumulation of 'Lys-63'-linked histone H2A and H2AX at DNA damage sites, thereby acting as a guard against excessive spreading of ubiquitinated chromatin at damaged chromosomes. The sequence is that of E3 ubiquitin-protein ligase TRIP12 (trip12) from Xenopus tropicalis (Western clawed frog).